Reading from the N-terminus, the 336-residue chain is MPPPAPGARLRLLAAAALAGLAVISRGLLSQSLEFNSPADNYTVCEGDNATLSCFIDEHVTRVAWLNRSNILYAGNDRWTSDPRVRLLINTPEEFSILITEVGLGDEGLYTCSFQTRHQPYTTQVYLIVHVPARIVNISSPVTVNEGGNVNLLCLAVGRPEPTVTWRQLRDGFTSEGEILEISDIQRGQAGEYECVTHNGVNSAPDSRRVLVTVNYPPTITDVTSARTALGRAALLRCEAMAVPPADFQWYKDDRLLSSGTAEGLKVQTERTRSMLLFANVSARHYGNYTCRAANRLGASSASMRLLRPGSLENSAPRPPGLLALLSALGWLWWRM.

An N-terminal signal peptide occupies residues 1-30; sequence MPPPAPGARLRLLAAAALAGLAVISRGLLS. Ig-like C2-type domains are found at residues 33-122, 132-217, and 218-307; these read LEFN…QPYT, PARI…VNYP, and PTIT…MRLL. N-linked (GlcNAc...) asparagine glycans are attached at residues Asn41, Asn49, Asn67, and Asn137. A disulfide bond links Cys54 and Cys112. Disulfide bonds link Cys154–Cys195 and Cys238–Cys291. An N-linked (GlcNAc...) asparagine glycan is attached at Asn288.

This sequence belongs to the immunoglobulin superfamily. IgLON family.

It is found in the secreted. In Homo sapiens (Human), this protein is IgLON family member 5 (IGLON5).